Reading from the N-terminus, the 201-residue chain is MCAARLSAAAQSTVYAFSARPLTGGEPVSLGSLRGKVLLIENVASLUGTTIRDYTEMNDLQKRLGPRGLVVLGFPCNQFGHQENGKNEEILNSLKYVRPGGGFEPNFTLFEKCEVNGEKAHPLFTFLRNALPTPSDDPTALMTDPKYIIWSPVCRNDIAWNFEKFLVGPDGVPVRRYSRRFRTIDIEPDIETLLSQQSGNS.

Residues Ser-7 and Ser-32 each carry the phosphoserine modification. The active site involves Sec-47. Sec-47 is a non-standard amino acid (selenocysteine). 3 positions are modified to N6-acetyllysine; alternate: Lys-62, Lys-86, and Lys-112. N6-succinyllysine; alternate is present on residues Lys-62, Lys-86, and Lys-112. Lys-119 carries the post-translational modification N6-acetyllysine. Lys-146 is modified (N6-acetyllysine; alternate). Lys-146 carries the post-translational modification N6-succinyllysine; alternate. Phosphoserine is present on Ser-195.

The protein belongs to the glutathione peroxidase family. In terms of assembly, homotetramer. Interacts with MIEN1. In terms of processing, during periods of oxidative stress, Sec-47 may react with a superoxide radical, irreversibly lose hydroselenide and be converted to dehydroalanine. In terms of tissue distribution, expressed in liver, kidney, lung, brain and heart.

It is found in the cytoplasm. Its subcellular location is the mitochondrion. The catalysed reaction is 2 glutathione + H2O2 = glutathione disulfide + 2 H2O. It catalyses the reaction a hydroperoxy polyunsaturated fatty acid + 2 glutathione = a hydroxy polyunsaturated fatty acid + glutathione disulfide + H2O. The enzyme catalyses tert-butyl hydroperoxide + 2 glutathione = tert-butanol + glutathione disulfide + H2O. It carries out the reaction cumene hydroperoxide + 2 glutathione = 2-phenylpropan-2-ol + glutathione disulfide + H2O. The catalysed reaction is (13S)-hydroperoxy-(9Z,11E)-octadecadienoate + 2 glutathione = (13S)-hydroxy-(9Z,11E)-octadecadienoate + glutathione disulfide + H2O. It catalyses the reaction (9S)-hydroperoxy-(10E,12Z)-octadecadienoate + 2 glutathione = (9S)-hydroxy-(10E,12Z)-octadecadienoate + glutathione disulfide + H2O. The enzyme catalyses (5S)-hydroperoxy-(6E,8Z,11Z,14Z)-eicosatetraenoate + 2 glutathione = (5S)-hydroxy-(6E,8Z,11Z,14Z)-eicosatetraenoate + glutathione disulfide + H2O. It carries out the reaction (12S)-hydroperoxy-(5Z,8Z,10E,14Z)-eicosatetraenoate + 2 glutathione = (12S)-hydroxy-(5Z,8Z,10E,14Z)-eicosatetraenoate + glutathione disulfide + H2O. The catalysed reaction is (12R)-hydroperoxy-(5Z,8Z,10E,14Z)-eicosatetraenoate + 2 glutathione = (12R)-hydroxy-(5Z,8Z,10E,14Z)-eicosatetraenoate + glutathione disulfide + H2O. It catalyses the reaction (15S)-hydroperoxy-(5Z,8Z,11Z,13E)-eicosatetraenoate + 2 glutathione = (15S)-hydroxy-(5Z,8Z,11Z,13E)-eicosatetraenoate + glutathione disulfide + H2O. The enzyme catalyses (5S)-hydroperoxy-(6E,8Z,11Z,14Z,17Z)-eicosapentaenoate + 2 glutathione = (5S)-hydroxy-(6E,8Z,11Z,14Z,17Z)-eicosapentaenoate + glutathione disulfide + H2O. It carries out the reaction (12S)-hydroperoxy-(5Z,8Z,10E,14Z,17Z)-eicosapentaenoate + 2 glutathione = (12S)-hydroxy-(5Z,8Z,10E,14Z,17Z)-eicosapentaenoate + glutathione disulfide + H2O. The catalysed reaction is (15S)-hydroperoxy-(5Z,8Z,11Z,13E,17Z)-eicosapentaenoate + 2 glutathione = (15S)-hydroxy-(5Z,8Z,11Z,13E,17Z)-eicosapentaenoate + glutathione disulfide + H2O. It catalyses the reaction (15S)-hydroperoxy-(11Z,13E)-eicosadienoate + 2 glutathione = (15S)-hydroxy-(11Z,13E)-eicosadienoate + glutathione disulfide + H2O. The enzyme catalyses (17S)-hydroperoxy-(4Z,7Z,10Z,13Z,15E,19Z)-docosahexaenoate + 2 glutathione = (17S)-hydroxy-(4Z,7Z,10Z,13Z,15E,19Z)-docosahexaenoate + glutathione disulfide + H2O. Functionally, catalyzes the reduction of hydroperoxides in a glutathione-dependent manner thus regulating cellular redox homeostasis. Can reduce small soluble hydroperoxides such as H2O2, cumene hydroperoxide and tert-butyl hydroperoxide, as well as several fatty acid-derived hydroperoxides. In platelets catalyzes the reduction of 12-hydroperoxyeicosatetraenoic acid, the primary product of the arachidonate 12-lipoxygenase pathway. The chain is Glutathione peroxidase 1 from Mus musculus (Mouse).